A 350-amino-acid polypeptide reads, in one-letter code: 3-isopropylmalate dehydrogenase (350 aa).

Residue 76–87 coordinates NAD(+); the sequence is GPKWDNAPKRPE. Substrate-binding residues include Arg94, Arg104, Arg132, and Asp217. Residues Asp217, Asp241, and Asp245 each coordinate Mg(2+). 275 to 287 contacts NAD(+); the sequence is GSAPDIANQNIAN.

This sequence belongs to the isocitrate and isopropylmalate dehydrogenases family. LeuB type 1 subfamily. Homodimer. Mg(2+) is required as a cofactor. Mn(2+) serves as cofactor.

It localises to the cytoplasm. The enzyme catalyses (2R,3S)-3-isopropylmalate + NAD(+) = 4-methyl-2-oxopentanoate + CO2 + NADH. It participates in amino-acid biosynthesis; L-leucine biosynthesis; L-leucine from 3-methyl-2-oxobutanoate: step 3/4. Its function is as follows. Catalyzes the oxidation of 3-carboxy-2-hydroxy-4-methylpentanoate (3-isopropylmalate) to 3-carboxy-4-methyl-2-oxopentanoate. The product decarboxylates to 4-methyl-2 oxopentanoate. The polypeptide is 3-isopropylmalate dehydrogenase (Listeria monocytogenes serotype 4b (strain F2365)).